The primary structure comprises 296 residues: MRHEELLTKTFQGPAVVCGTPTSHVYMFKNGSGDSGDSSEEESHRVVLRPRGKERHKSGVHQPPQAGAGDVVLLQRELAQEDSLNKLALQYGCKVADIKKVNNFIREQDLYALKSVKIPVRNHGILMETHKELKPLLSPSSETTVTVELPEADRAGAGTGAQAGQLMGFFKGIDQDIERAVQSEIFLHESYCMDTSHQPLLPAPPKTPMDGADCGIQWWNAVFIMLLIGIVLPVFYLVYFKIQASGETPNSLNTTVIPNGSMAMGTVPGQAPRLAVAVPAVTSADSQFSQTTQAGS.

The Extracellular segment spans residues Met-1–Gln-217. Residues Lys-29–Gly-67 form a disordered region. Asn-30 is a glycosylation site (N-linked (GlcNAc...) asparagine). Over residues Val-46–Gly-59 the composition is skewed to basic residues. Residues Leu-74 to Ile-118 enclose the LysM domain. A helical transmembrane segment spans residues Trp-218–Val-238. Residues Tyr-239–Ser-296 lie on the Cytoplasmic side of the membrane.

The protein resides in the membrane. The sequence is that of LysM and putative peptidoglycan-binding domain-containing protein 4 (LYSMD4) from Homo sapiens (Human).